A 245-amino-acid chain; its full sequence is DNA polymerase sliding clamp 1 (245 aa).

The protein belongs to the PCNA family. The subunits circularize to form a toroid; DNA passes through its center. Replication factor C (RFC) is required to load the toroid on the DNA. Forms a dimeric complex with PCNA3 and a trimeric complex with PCNA2 and PCNA3; does not form homotrimers.

Its function is as follows. Sliding clamp subunit that acts as a moving platform for DNA processing. Responsible for tethering the catalytic subunit of DNA polymerase and other proteins to DNA during high-speed replication. The trimeric complex inhibits DNA ligase and both 3'-5' and 5'-3' activity of Hel308 (Hjm) helicase, but stimulates Hjc, the Holliday junction cleavage enzyme. The chain is DNA polymerase sliding clamp 1 from Sulfurisphaera tokodaii (strain DSM 16993 / JCM 10545 / NBRC 100140 / 7) (Sulfolobus tokodaii).